Consider the following 223-residue polypeptide: Sigma non-opioid intracellular receptor 1 (223 aa).

Residues 1–9 (MQWAVGRRW) lie on the Lumenal side of the membrane. Residues 2–8 (QWAVGRR) form a targeting to endoplasmic reticulum-associated lipid droplets region. A helical transmembrane segment spans residues 10-30 (LWVALFLAAVAVLTQIVWLWL). Topologically, residues 31–223 (GTQNFVFQRE…LTTYLFGQDP (193 aa)) are cytoplasmic. Positions 99-106 (SLSEYVLL) are important for ligand-binding. The interval 177 to 223 (VIPSTLGFALADTVFSTQDFLTLFYTLRVYARALQLELTTYLFGQDP) is C-terminal hydrophobic region.

This sequence belongs to the ERG2 family. Homotrimer. Forms a ternary complex with ANK2 and ITPR3. The complex is disrupted by agonists. Interacts with KCNA4. Interacts with KCNA2; cocaine consumption leads to increased interaction. Interacts with RNF112 in an oxidative stress-regulated manner. In terms of tissue distribution, ubiquitously expressed with higher expression in liver, kidney and steroid-producing tissues such as placenta, ovary and adrenal gland.

It localises to the nucleus inner membrane. Its subcellular location is the nucleus outer membrane. The protein resides in the nucleus envelope. It is found in the cytoplasmic vesicle. The protein localises to the endoplasmic reticulum membrane. It localises to the membrane. Its subcellular location is the lipid droplet. The protein resides in the cell junction. It is found in the cell membrane. The protein localises to the cell projection. It localises to the growth cone. Its subcellular location is the postsynaptic density membrane. In terms of biological role, functions in lipid transport from the endoplasmic reticulum and is involved in a wide array of cellular functions probably through regulation of the biogenesis of lipid microdomains at the plasma membrane. Involved in the regulation of different receptors it plays a role in BDNF signaling and EGF signaling. Also regulates ion channels like the potassium channel and could modulate neurotransmitter release. Plays a role in calcium signaling through modulation together with ANK2 of the ITP3R-dependent calcium efflux at the endoplasmic reticulum. Plays a role in several other cell functions including proliferation, survival and death. Originally identified for its ability to bind various psychoactive drugs it is involved in learning processes, memory and mood alteration. Necessary for proper mitochondrial axonal transport in motor neurons, in particular the retrograde movement of mitochondria. Plays a role in protecting cells against oxidative stress-induced cell death via its interaction with RNF112. The protein is Sigma non-opioid intracellular receptor 1 (SIGMAR1) of Cavia porcellus (Guinea pig).